Here is a 227-residue protein sequence, read N- to C-terminus: GFP-like non-fluorescent chromoprotein (227 aa).

Positions 63–65 (EYG) form a cross-link, 2-iminomethyl-5-imidazolinone (Glu-Gly). Tyr64 carries the 2,3-didehydrotyrosine modification.

Belongs to the GFP family. As to quaternary structure, homotetramer. Post-translationally, contains a chromophore consisting of modified amino acid residues. The chromophore is formed by autocatalytic backbone condensation between Xaa-N and Gly-(N+2), oxidation of Tyr-(N+1) to didehydrotyrosine, and formation of a double bond to the alpha-amino nitrogen of residue Xaa-N. Maturation of the chromophore requires nothing other than molecular oxygen. The precise stereochemistry of the tyrosine has not been determined.

Its function is as follows. Non-fluorescent pigment protein that is lilac in color. This Radianthus crispa (Leathery sea anemone) protein is GFP-like non-fluorescent chromoprotein.